The sequence spans 574 residues: VAO-type flavoprotein oxidase VAO615 (574 aa).

The first 17 residues, 1 to 17 (MPASLLRFLALAGTAVG), serve as a signal peptide directing secretion. Intrachain disulfides connect C28–C572, C64–C77, C108–C118, and C450–C476. N47 carries N-linked (GlcNAc...) asparagine glycosylation. Residue N105 is glycosylated (N-linked (GlcNAc...) asparagine). The FAD-binding PCMH-type domain maps to 120–299 (LGNYPSYVVN…LSMTARLHRD (180 aa)). N-linked (GlcNAc...) asparagine glycosylation is found at N129, N211, N310, N346, and N438. The segment at residues 157 to 222 (HDYLGKSTGK…TGHRIVGGTC (66 aa)) is a cross-link (6-(S-cysteinyl)-8alpha-(pros-histidyl)-FAD (His-Cys)).

It belongs to the oxygen-dependent FAD-linked oxidoreductase family. FAD is required as a cofactor. In terms of processing, the FAD cofactor is bound via a bicovalent 6-S-cysteinyl, 8alpha-N1-histidyl FAD linkage.

The protein resides in the secreted. In terms of biological role, probably oxidoreductase that, when reduced, rapidly reacts with molecular oxygen, a hallmark of flavoprotein oxidases. A large panel of alcohols, including carbohydrates, steroids and secondary alcohols were tested as potential substrates, but none has been identified so far. In Thermothelomyces thermophilus (strain ATCC 42464 / BCRC 31852 / DSM 1799) (Sporotrichum thermophile), this protein is VAO-type flavoprotein oxidase VAO615.